Here is an 842-residue protein sequence, read N- to C-terminus: Outer membrane usher protein LpfC (842 aa).

The N-terminal stretch at methionine 1–alanine 21 is a signal peptide. Residues cysteine 819 and cysteine 841 are joined by a disulfide bond.

Belongs to the fimbrial export usher family.

The protein localises to the cell outer membrane. Involved in the export and assembly of LpfA fimbrial subunits across the outer membrane. The chain is Outer membrane usher protein LpfC (lpfC) from Salmonella typhimurium (strain LT2 / SGSC1412 / ATCC 700720).